We begin with the raw amino-acid sequence, 406 residues long: Large ribosomal subunit protein uL4z (406 aa).

Positions 56–95 are disordered; the sequence is PYAVSKKAGHQTSAESWGTGRAVSRIPRVPGGGTHRAGQA.

This sequence belongs to the universal ribosomal protein uL4 family.

This Arabidopsis thaliana (Mouse-ear cress) protein is Large ribosomal subunit protein uL4z (RPL4A).